We begin with the raw amino-acid sequence, 1553 residues long: DNA topoisomerase 2-alpha (1553 aa).

The interval 1–25 (MELLDSPAPLRPLHDNPRLPKADGA) is disordered. The span at 12 to 25 (PLHDNPRLPKADGA) shows a compositional bias: basic and acidic residues. ATP-binding positions include asparagine 92, asparagine 121, 149-151 (SSN), and 162-169 (GRNGYGAK). The tract at residues 343-345 (KKK) is interaction with DNA. ATP is bound at residue 377–379 (QTK). A Toprim domain is found at 456–573 (CTLILTEGDS…SLLRHNFLEE (118 aa)). Positions 462, 542, and 544 each coordinate Mg(2+). A Topo IIA-type catalytic domain is found at 716 to 1163 (IPSLVDGLKP…SPSDLWKEDL (448 aa)). Residue tyrosine 806 is the O-(5'-phospho-DNA)-tyrosine intermediate of the active site. Residues 991-1000 (KLQTNLTCNS) form an interaction with DNA region. 2 disordered regions span residues 1095–1114 (QNKE…AATG) and 1186–1553 (TGKP…DDMF). Over residues 1098–1107 (EEEEGDESGE) the composition is skewed to acidic residues. Residues 1242–1262 (SEKNESDEKQEGNSSGDKEPS) show a composition bias toward basic and acidic residues. 2 stretches are compositionally biased toward acidic residues: residues 1300–1310 (SESDSESDDFE) and 1334–1349 (SDAD…EYQE). The span at 1371 to 1385 (VPKEKKGKAPKEKPL) shows a compositional bias: basic and acidic residues. Over residues 1413-1432 (PRAQAVPKKPAAAKKGSTAK) the composition is skewed to low complexity. A compositionally biased stretch (basic residues) spans 1444-1454 (KKKAAPKAPRR). Low complexity predominate over residues 1517–1532 (SIDLTADSPAAAAPRT).

Belongs to the type II topoisomerase family. As to quaternary structure, homodimer. Mg(2+) serves as cofactor. The cofactor is Mn(2+). Ca(2+) is required as a cofactor.

The protein localises to the cytoplasm. It localises to the nucleus. The protein resides in the nucleoplasm. Its subcellular location is the nucleolus. It catalyses the reaction ATP-dependent breakage, passage and rejoining of double-stranded DNA.. Functionally, key decatenating enzyme that alters DNA topology by binding to two double-stranded DNA molecules, generating a double-stranded break in one of the strands, passing the intact strand through the broken strand, and religating the broken strand. May play a role in the regulation of circadian rhythm. The polypeptide is DNA topoisomerase 2-alpha (TOP2A) (Gallus gallus (Chicken)).